The chain runs to 22 residues: leu leader peptide (22 aa).

Positions 1 to 22 (MLHHMTSRANLLLLRRGGSQRS) are disordered. The segment covering 11–22 (LLLLRRGGSQRS) has biased composition (low complexity).

Involved in control of the biosynthesis of leucine. In Corynebacterium glutamicum (strain ATCC 13032 / DSM 20300 / JCM 1318 / BCRC 11384 / CCUG 27702 / LMG 3730 / NBRC 12168 / NCIMB 10025 / NRRL B-2784 / 534), this protein is leu leader peptide (leuL).